Here is a 166-residue protein sequence, read N- to C-terminus: Small ribosomal subunit protein uS5 (166 aa).

An S5 DRBM domain is found at 11-74 (LQEKLIAVNR…EKARRNMINV (64 aa)).

The protein belongs to the universal ribosomal protein uS5 family. As to quaternary structure, part of the 30S ribosomal subunit. Contacts proteins S4 and S8.

With S4 and S12 plays an important role in translational accuracy. In terms of biological role, located at the back of the 30S subunit body where it stabilizes the conformation of the head with respect to the body. In Pasteurella multocida (strain Pm70), this protein is Small ribosomal subunit protein uS5.